The following is a 190-amino-acid chain: MAERENRRGNRRDREEAAPEFADRLVAINRVSKTVKGGKRFGFAALVVVGDQKGRVGFGKGKAKEVPEAIRKATEQAKRQMIRVQLREGRTLHHDIEGRHGAGKVVMRAAPEGTGIIAGGPMRAVFEMLGVKDVVSKSLGSANPYNMIRATIDGLKKEQSPRSVAQRRGKKVADILPKRDEAPAAEAAEA.

In terms of domain architecture, S5 DRBM spans 21–84 (FADRLVAINR…EQAKRQMIRV (64 aa)). A disordered region spans residues 156-190 (KKEQSPRSVAQRRGKKVADILPKRDEAPAAEAAEA). Residues 171-182 (KVADILPKRDEA) show a composition bias toward basic and acidic residues.

Belongs to the universal ribosomal protein uS5 family. Part of the 30S ribosomal subunit. Contacts proteins S4 and S8.

With S4 and S12 plays an important role in translational accuracy. Functionally, located at the back of the 30S subunit body where it stabilizes the conformation of the head with respect to the body. The protein is Small ribosomal subunit protein uS5 of Ruegeria pomeroyi (strain ATCC 700808 / DSM 15171 / DSS-3) (Silicibacter pomeroyi).